The chain runs to 127 residues: Protein ApaG (127 aa).

Positions 3-127 (KDKRYAFSVK…FQLNMPRVLH (125 aa)) constitute an ApaG domain.

The chain is Protein ApaG from Methylobacillus flagellatus (strain ATCC 51484 / DSM 6875 / VKM B-1610 / KT).